The following is an 84-amino-acid chain: RNA-binding protein Hfq (84 aa).

In terms of domain architecture, Sm spans 9–68 (DPYLNTLRKERVPVSIYLVNGIKLQGQIESFDQFVILLKNTVSQMVYKHAISTVVPGRPV).

It belongs to the Hfq family. Homohexamer.

In terms of biological role, RNA chaperone that binds small regulatory RNA (sRNAs) and mRNAs to facilitate mRNA translational regulation in response to envelope stress, environmental stress and changes in metabolite concentrations. Also binds with high specificity to tRNAs. This Stutzerimonas stutzeri (strain A1501) (Pseudomonas stutzeri) protein is RNA-binding protein Hfq.